The primary structure comprises 179 residues: Isopentenyl-diphosphate Delta-isomerase (179 aa).

Mn(2+)-binding residues include histidine 25 and histidine 31. In terms of domain architecture, Nudix hydrolase spans 29–161 (ELHRAITVYI…PEQFTAWFQL (133 aa)). Cysteine 66 is an active-site residue. Cysteine 66 is a binding site for Mg(2+). Histidine 68 contributes to the Mn(2+) binding site. Mg(2+) is bound at residue glutamate 86. Positions 111 and 113 each coordinate Mn(2+). Glutamate 113 is a catalytic residue.

This sequence belongs to the IPP isomerase type 1 family. In terms of assembly, homodimer. It depends on Mg(2+) as a cofactor. Mn(2+) is required as a cofactor.

It is found in the cytoplasm. It carries out the reaction isopentenyl diphosphate = dimethylallyl diphosphate. Its pathway is isoprenoid biosynthesis; dimethylallyl diphosphate biosynthesis; dimethylallyl diphosphate from isopentenyl diphosphate: step 1/1. Its function is as follows. Catalyzes the 1,3-allylic rearrangement of the homoallylic substrate isopentenyl (IPP) to its highly electrophilic allylic isomer, dimethylallyl diphosphate (DMAPP). The polypeptide is Isopentenyl-diphosphate Delta-isomerase (Pectobacterium atrosepticum (strain SCRI 1043 / ATCC BAA-672) (Erwinia carotovora subsp. atroseptica)).